The chain runs to 100 residues: Large ribosomal subunit protein uL23 (100 aa).

It belongs to the universal ribosomal protein uL23 family. As to quaternary structure, part of the 50S ribosomal subunit. Contacts protein L29, and trigger factor when it is bound to the ribosome.

Its function is as follows. One of the early assembly proteins it binds 23S rRNA. One of the proteins that surrounds the polypeptide exit tunnel on the outside of the ribosome. Forms the main docking site for trigger factor binding to the ribosome. This Rippkaea orientalis (strain PCC 8801 / RF-1) (Cyanothece sp. (strain PCC 8801)) protein is Large ribosomal subunit protein uL23.